The primary structure comprises 87 residues: MNGNQIKQLKKLYRHILNEASKFENINYNVYFSNKAKEKFREFCSDTNFESEKLKTFQNECWDYLNMLKRQTIIHNLYHVDKPLVNK.

The protein belongs to the complex I LYR family. As to quaternary structure, interacts with IscS; the interaction enhances cysteine desulfurase activity of IscS. Component of a complex, at least composed of IscS, Isd11 and IscU.

It localises to the mitochondrion. Its pathway is cofactor biosynthesis; iron-sulfur cluster biosynthesis. Functionally, participates in iron-sulfur cluster formation (ISC) pathway for iron-sulfur (Fe-S) cluster biogenesis. Enhances cysteine desulfurase activity of IscS. The polypeptide is Protein Isd11 (Plasmodium falciparum (isolate 3D7)).